An 87-amino-acid chain; its full sequence is U15-lycotoxin-Ls1f (87 aa).

The signal sequence occupies residues 1–20 (MNSKIFAVLLLLAFLSCVLS). Residues 21–66 (DQYCPKSSITACKKMNIRNDCCKDDDCTGGSWCCATPCGNFCKYPT) enclose the WAP domain. Intrachain disulfides connect cysteine 24-cysteine 54, cysteine 32-cysteine 58, cysteine 41-cysteine 53, cysteine 42-cysteine 80, and cysteine 47-cysteine 62.

It belongs to the venom protein 11 family. 01 (wap-1) subfamily. Post-translationally, contains 5 disulfide bonds. Expressed by the venom gland.

The protein resides in the secreted. Has antibacterial activity. This chain is U15-lycotoxin-Ls1f, found in Lycosa singoriensis (Wolf spider).